A 335-amino-acid chain; its full sequence is Adenosine deaminase (335 aa).

The Zn(2+) site is built by histidine 12 and histidine 14. The substrate site is built by histidine 14 and aspartate 16. Histidine 197 contacts Zn(2+). The active-site Proton donor is glutamate 200. Aspartate 278 contacts Zn(2+).

This sequence belongs to the metallo-dependent hydrolases superfamily. Adenosine and AMP deaminases family. Adenosine deaminase subfamily. The cofactor is Zn(2+).

It catalyses the reaction adenosine + H2O + H(+) = inosine + NH4(+). It carries out the reaction 2'-deoxyadenosine + H2O + H(+) = 2'-deoxyinosine + NH4(+). In terms of biological role, catalyzes the hydrolytic deamination of adenosine and 2-deoxyadenosine. The polypeptide is Adenosine deaminase (Clostridium botulinum (strain Langeland / NCTC 10281 / Type F)).